A 396-amino-acid chain; its full sequence is Schizokinen exporter SchE (396 aa).

Positions 1–25 (MLPKLILLATLYISQFIPTTFFIQA) are cleaved as a signal peptide. Residues 26-39 (LPVFMRQQKMSLDV) are Cytoplasmic-facing. The chain crosses the membrane as a helical span at residues 40 to 60 (IGFLGLLILPSGLKFLWSPFI). The Periplasmic segment spans residues 61–73 (DRYRLGKLGHYRG). The helical transmembrane segment at 74–94 (WIICFQLLLISTMLVTAFIDI) threads the bilayer. The Cytoplasmic segment spans residues 95–104 (QDNLNAFLTC). The chain crosses the membrane as a helical span at residues 105-127 (MFLASLFSSSQDIATDALAVNLL). The Periplasmic segment spans residues 128–137 (EPQERGLGNA). Residues 138–158 (IQSGGNIFGAIIGGGVMLILL) traverse the membrane as a helical segment. At 159 to 162 (DKIG) the chain is on the cytoplasmic side. The chain crosses the membrane as a helical span at residues 163 to 183 (WRYSLITLSIFMLINLVPILI). The Periplasmic portion of the chain corresponds to 184–214 (YREKSQHQLENSTFFRSYFQPFISFLSRPKA). Residues 215 to 235 (LPWLFVVLLYMMGDSVTSLMI) form a helical membrane-spanning segment. Topologically, residues 236–251 (RPLLVDRGLSLPDIGW) are cytoplasmic. A helical membrane pass occupies residues 252-272 (ILGIVSYSARIVSALIAGLVI). Topologically, residues 273–281 (VKLGRIKSL) are periplasmic. A helical transmembrane segment spans residues 282–302 (IIFGFIADLTTLLYIIPAIGV). The Cytoplasmic segment spans residues 303-304 (SS). A helical membrane pass occupies residues 305-325 (LLVLYTVCIIVNATQSMAYTA). Over 326-346 (LLSAMMDKCEKNTAATDYTMQ) the chain is Periplasmic. 2 consecutive transmembrane segments (helical) span residues 347–367 (VSVM…LATT) and 368–388 (MGYS…VFLI). The Periplasmic portion of the chain corresponds to 389–396 (TQEYGVSS).

Belongs to the major facilitator superfamily.

It localises to the cell inner membrane. Its function is as follows. Involved in the TolC-like protein HgdD-dependent secretion of schizokinen, a dihydroxamate-type siderophore. Transports schizokinen from the cytoplasm to the periplasm. The protein is Schizokinen exporter SchE of Nostoc sp. (strain PCC 7120 / SAG 25.82 / UTEX 2576).